The chain runs to 82 residues: Omega-conotoxin PnVIB (82 aa).

The first 22 residues, 1–22 (MKLTCMMIVAVLFLTAWTVVTA), serve as a signal peptide directing secretion. Positions 23 to 52 (EPHSSNVLENLYLKAHHEMENPEASKLNTR) are excised as a propeptide. 3 disulfides stabilise this stretch: Cys56–Cys73, Cys63–Cys77, and Cys72–Cys81.

In terms of tissue distribution, expressed by the venom duct.

The protein resides in the secreted. Omega-conotoxins act at presynaptic membranes, they bind and block voltage-gated calcium channels (Cav). Acts on high voltage-activated (HVA) calcium currents in molluscan neurons. The sequence is that of Omega-conotoxin PnVIB from Conus pennaceus (Feathered cone).